Here is a 490-residue protein sequence, read N- to C-terminus: DNA-binding protein D-ETS-3 (490 aa).

Disordered stretches follow at residues 190–255 (TASS…SGGG) and 271–294 (SSTQ…SQLR). The segment covering 196-207 (HVEHKVRADKST) has biased composition (basic and acidic residues). Positions 211 to 227 (ATTSSHAAAPSSSSSAS) are enriched in low complexity. Residues 244–255 (GTGGGASASGGG) are compositionally biased toward gly residues. Residues 271–280 (SSTQSQGYSS) are compositionally biased toward low complexity. A DNA-binding region (ETS) is located at residues 317–397 (IQLWQFLLEL…HGKRYAYKFD (81 aa)).

It belongs to the ETS family. Embryonic ventral nervous system, higher in the thoracic than abdominal segments.

Its subcellular location is the nucleus. This chain is DNA-binding protein D-ETS-3 (Ets65A), found in Drosophila melanogaster (Fruit fly).